The chain runs to 270 residues: Glutamate racemase (270 aa).

Substrate is bound by residues 7–8 (DS) and 39–40 (YG). Cys-70 (proton donor/acceptor) is an active-site residue. 71–72 (NT) contacts substrate. Cys-194 acts as the Proton donor/acceptor in catalysis. 195–196 (TH) is a substrate binding site.

Belongs to the aspartate/glutamate racemases family.

It catalyses the reaction L-glutamate = D-glutamate. It functions in the pathway cell wall biogenesis; peptidoglycan biosynthesis. Functionally, provides the (R)-glutamate required for cell wall biosynthesis. This chain is Glutamate racemase, found in Cereibacter sphaeroides (strain ATCC 17023 / DSM 158 / JCM 6121 / CCUG 31486 / LMG 2827 / NBRC 12203 / NCIMB 8253 / ATH 2.4.1.) (Rhodobacter sphaeroides).